A 360-amino-acid chain; its full sequence is Lactosylceramide 4-alpha-galactosyltransferase (360 aa).

Residues 1-30 (MGISRSDLEETMSKPPDCLPRMLRGTPRQR) lie on the Cytoplasmic side of the membrane. A helical; Signal-anchor for type II membrane protein membrane pass occupies residues 31–51 (VFTLFIISFKFTFLVSILIYW). At 52-360 (HTVGAPKDQR…TTHRAMTMYL (309 aa)) the chain is on the lumenal side. The DXD motif motif lies at 199 to 201 (DTD). Asn-210 and Asn-316 each carry an N-linked (GlcNAc...) asparagine glycan.

It belongs to the glycosyltransferase 32 family. In terms of tissue distribution, ubiquitous. Highly expressed in kidney, mesenteric lymph node, spleen and brain.

The protein resides in the golgi apparatus membrane. The enzyme catalyses a beta-D-Gal-(1-&gt;4)-beta-D-Glc-(1&lt;-&gt;1)-Cer(d18:1(4E)) + UDP-alpha-D-galactose = a globoside Gb3Cer (d18:1(4E)) + UDP + H(+). It catalyses the reaction a beta-D-Gal-(1&lt;-&gt;1')-ceramide + UDP-alpha-D-galactose = alpha-D-Gal-(1-&gt;4)-beta-D-Gal-(1&lt;-&gt;1')-Cer + UDP + H(+). The protein operates within glycolipid biosynthesis. Its function is as follows. Catalyzes the transfer of galactose from UDP-alpha-D-galactose to lactosylceramide/beta-D-galactosyl-(1-&gt;4)-beta-D-glucosyl-(1&lt;-&gt;1)-ceramide(d18:1(4E)) to produce globotriaosylceramide/globoside Gb3Cer (d18:1(4E)). Also able to transfer galactose to galactosylceramide/beta-D-Gal-(1&lt;-&gt;1')-Cer. Globoside Gb3Cer is a glycosphingolipid of the globo serie, one of the major types of neutral root structures of glycosphingolipids, that constitute a significant portion of mammalian cell membranes. The protein is Lactosylceramide 4-alpha-galactosyltransferase of Rattus norvegicus (Rat).